The sequence spans 521 residues: (+)-kolavenyl diphosphate synthase (521 aa).

The Mg(2+) site is built by aspartate 311 and aspartate 313. Positions 311–314 (DGDD) match the DXDD motif motif.

Belongs to the terpene synthase family. Mg(2+) serves as cofactor.

The catalysed reaction is (2E,6E,10E)-geranylgeranyl diphosphate = (+)-kolavenyl diphosphate. Involved in the biosynthesis of (+)-O-methylkolavelool. Catalyzes the conversion of geranylgeranyl diphosphate into (+)-kolavenyl diphosphate. The chain is (+)-kolavenyl diphosphate synthase from Herpetosiphon aurantiacus (strain ATCC 23779 / DSM 785 / 114-95).